The primary structure comprises 136 residues: Large ribosomal subunit protein uL14 (136 aa).

Belongs to the universal ribosomal protein uL14 family.

The protein is Large ribosomal subunit protein uL14 (rpl23) of Dictyostelium discoideum (Social amoeba).